The following is a 307-amino-acid chain: Aspartate carbamoyltransferase catalytic subunit (307 aa).

Carbamoyl phosphate contacts are provided by Arg-54 and Thr-55. L-aspartate is bound at residue Lys-83. Positions 104, 132, and 135 each coordinate carbamoyl phosphate. Residues Arg-165 and Arg-228 each coordinate L-aspartate. The carbamoyl phosphate site is built by Leu-267 and Pro-268.

The protein belongs to the aspartate/ornithine carbamoyltransferase superfamily. ATCase family. As to quaternary structure, heterododecamer (2C3:3R2) of six catalytic PyrB chains organized as two trimers (C3), and six regulatory PyrI chains organized as three dimers (R2).

The catalysed reaction is carbamoyl phosphate + L-aspartate = N-carbamoyl-L-aspartate + phosphate + H(+). It functions in the pathway pyrimidine metabolism; UMP biosynthesis via de novo pathway; (S)-dihydroorotate from bicarbonate: step 2/3. Functionally, catalyzes the condensation of carbamoyl phosphate and aspartate to form carbamoyl aspartate and inorganic phosphate, the committed step in the de novo pyrimidine nucleotide biosynthesis pathway. In Clostridium botulinum (strain Okra / Type B1), this protein is Aspartate carbamoyltransferase catalytic subunit.